A 334-amino-acid chain; its full sequence is Holliday junction branch migration complex subunit RuvB (334 aa).

Residues 1–182 (MDERLVSSEA…FGVMSRLEYY (182 aa)) form a large ATPase domain (RuvB-L) region. Residues leucine 21, arginine 22, glycine 63, lysine 66, threonine 67, threonine 68, 129 to 131 (EDF), arginine 172, tyrosine 182, and arginine 219 contribute to the ATP site. Residue threonine 67 coordinates Mg(2+). Residues 183–253 (TQEELADIVT…ISQNALERLQ (71 aa)) form a small ATPAse domain (RuvB-S) region. The tract at residues 256–334 (RLGLDHIDHK…HFQMEAPRYD (79 aa)) is head domain (RuvB-H). The DNA site is built by arginine 311 and arginine 316.

It belongs to the RuvB family. In terms of assembly, homohexamer. Forms an RuvA(8)-RuvB(12)-Holliday junction (HJ) complex. HJ DNA is sandwiched between 2 RuvA tetramers; dsDNA enters through RuvA and exits via RuvB. An RuvB hexamer assembles on each DNA strand where it exits the tetramer. Each RuvB hexamer is contacted by two RuvA subunits (via domain III) on 2 adjacent RuvB subunits; this complex drives branch migration. In the full resolvosome a probable DNA-RuvA(4)-RuvB(12)-RuvC(2) complex forms which resolves the HJ. Homohexamer which interacts with RecU.

The protein localises to the cytoplasm. The catalysed reaction is ATP + H2O = ADP + phosphate + H(+). Its function is as follows. The RuvA-RuvB-RuvC complex processes Holliday junction (HJ) DNA during genetic recombination and DNA repair, while the RuvA-RuvB complex plays an important role in the rescue of blocked DNA replication forks via replication fork reversal (RFR). RuvA specifically binds to HJ cruciform DNA, conferring on it an open structure. The RuvB hexamer acts as an ATP-dependent pump, pulling dsDNA into and through the RuvAB complex. RuvB forms 2 homohexamers on either side of HJ DNA bound by 1 or 2 RuvA tetramers; 4 subunits per hexamer contact DNA at a time. Coordinated motions by a converter formed by DNA-disengaged RuvB subunits stimulates ATP hydrolysis and nucleotide exchange. Immobilization of the converter enables RuvB to convert the ATP-contained energy into a lever motion, pulling 2 nucleotides of DNA out of the RuvA tetramer per ATP hydrolyzed, thus driving DNA branch migration. The RuvB motors rotate together with the DNA substrate, which together with the progressing nucleotide cycle form the mechanistic basis for DNA recombination by continuous HJ branch migration. Branch migration allows RuvC to scan DNA until it finds its consensus sequence, where it cleaves and resolves cruciform DNA. This is Holliday junction branch migration complex subunit RuvB from Bacillus subtilis (strain 168).